The chain runs to 120 residues: Immunoglobulin kappa variable 2D-29 (120 aa).

An N-terminal signal peptide occupies residues 1 to 20; that stretch reads MRLPAQLLGLLMLWIPGSSA. Residues 21 to 43 form a framework-1 region; that stretch reads DIVMTQTPLSLSVTPGQPASISC. The 100-residue stretch at 21–120 folds into the Ig-like domain; that stretch reads DIVMTQTPLS…YYCMQSIQLP (100 aa). A disulfide bridge connects residues cysteine 43 and cysteine 113. The tract at residues 44-59 is complementarity-determining-1; it reads KSSQSLLHSDGKTYLY. A framework-2 region spans residues 60–74; that stretch reads WYLQKPGQPPQLLIY. A complementarity-determining-2 region spans residues 75 to 81; that stretch reads EVSNRFS. The tract at residues 82–113 is framework-3; that stretch reads GVPDRFSGSGSGTDFTLKISRVEAEDVGVYYC. The interval 114–120 is complementarity-determining-3; it reads MQSIQLP.

As to quaternary structure, immunoglobulins are composed of two identical heavy chains and two identical light chains; disulfide-linked.

It is found in the secreted. It localises to the cell membrane. In terms of biological role, v region of the variable domain of immunoglobulin light chains that participates in the antigen recognition. Immunoglobulins, also known as antibodies, are membrane-bound or secreted glycoproteins produced by B lymphocytes. In the recognition phase of humoral immunity, the membrane-bound immunoglobulins serve as receptors which, upon binding of a specific antigen, trigger the clonal expansion and differentiation of B lymphocytes into immunoglobulins-secreting plasma cells. Secreted immunoglobulins mediate the effector phase of humoral immunity, which results in the elimination of bound antigens. The antigen binding site is formed by the variable domain of one heavy chain, together with that of its associated light chain. Thus, each immunoglobulin has two antigen binding sites with remarkable affinity for a particular antigen. The variable domains are assembled by a process called V-(D)-J rearrangement and can then be subjected to somatic hypermutations which, after exposure to antigen and selection, allow affinity maturation for a particular antigen. This Homo sapiens (Human) protein is Immunoglobulin kappa variable 2D-29.